Here is a 389-residue protein sequence, read N- to C-terminus: Liposome tubulation protein MamY (389 aa).

Residues 1 to 31 (MAIAAIMGDVLMLMGFNKAAFGKLNSASRAA) lie on the Cytoplasmic side of the membrane. A helical membrane pass occupies residues 32–52 (LIGAVIWAVLSIVYLTIFNGW). Residues 53-62 (KNLFTMLPHE) are Lumenal-facing. Residues 63-83 (FFIVLLSIALPIGLTVLILML) traverse the membrane as a helical segment. At 84–389 (SRIVKSVDTL…TETAPDSGMD (306 aa)) the chain is on the cytoplasmic side.

Belongs to the magnetosome MamY family.

It is found in the magnetosome membrane. Causes tubulation when added to magnetosome-derived liposomes, binds liposomes; may be involved in constriction of the cell inner membrane to form mature magnetosomes. Binds preferentially to cardiolipin, a component of bacterial membranes, with very poor to no binding of other tested (phospho)lipids. Addition of cardiolipin to magnetosome-derived lipids increases tubulation. May function with MamX, MamZ amd Mms6. This is Liposome tubulation protein MamY from Paramagnetospirillum magneticum (strain ATCC 700264 / AMB-1) (Magnetospirillum magneticum).